Consider the following 417-residue polypeptide: Serine hydroxymethyltransferase 1 (417 aa).

(6S)-5,6,7,8-tetrahydrofolate-binding positions include L121 and 125-127 (GHL). At K230 the chain carries N6-(pyridoxal phosphate)lysine. 355 to 357 (SPF) serves as a coordination point for (6S)-5,6,7,8-tetrahydrofolate.

Belongs to the SHMT family. In terms of assembly, homodimer. Pyridoxal 5'-phosphate serves as cofactor.

The protein localises to the cytoplasm. It carries out the reaction (6R)-5,10-methylene-5,6,7,8-tetrahydrofolate + glycine + H2O = (6S)-5,6,7,8-tetrahydrofolate + L-serine. It participates in one-carbon metabolism; tetrahydrofolate interconversion. The protein operates within amino-acid biosynthesis; glycine biosynthesis; glycine from L-serine: step 1/1. In terms of biological role, catalyzes the reversible interconversion of serine and glycine with tetrahydrofolate (THF) serving as the one-carbon carrier. This reaction serves as the major source of one-carbon groups required for the biosynthesis of purines, thymidylate, methionine, and other important biomolecules. Also exhibits THF-independent aldolase activity toward beta-hydroxyamino acids, producing glycine and aldehydes, via a retro-aldol mechanism. This Pseudomonas syringae pv. tomato (strain ATCC BAA-871 / DC3000) protein is Serine hydroxymethyltransferase 1.